A 77-amino-acid polypeptide reads, in one-letter code: UPF0291 protein BLi02035/BL02933 (77 aa).

Residues 57–77 (PEGNDVTPEKLKQEKRNRRLH) form a disordered region.

It belongs to the UPF0291 family.

It is found in the cytoplasm. The sequence is that of UPF0291 protein BLi02035/BL02933 from Bacillus licheniformis (strain ATCC 14580 / DSM 13 / JCM 2505 / CCUG 7422 / NBRC 12200 / NCIMB 9375 / NCTC 10341 / NRRL NRS-1264 / Gibson 46).